A 151-amino-acid chain; its full sequence is 3-hydroxyacyl-[acyl-carrier-protein] dehydratase FabZ (151 aa).

His-49 is a catalytic residue.

This sequence belongs to the thioester dehydratase family. FabZ subfamily.

Its subcellular location is the cytoplasm. It carries out the reaction a (3R)-hydroxyacyl-[ACP] = a (2E)-enoyl-[ACP] + H2O. Involved in unsaturated fatty acids biosynthesis. Catalyzes the dehydration of short chain beta-hydroxyacyl-ACPs and long chain saturated and unsaturated beta-hydroxyacyl-ACPs. The polypeptide is 3-hydroxyacyl-[acyl-carrier-protein] dehydratase FabZ (Wolinella succinogenes (strain ATCC 29543 / DSM 1740 / CCUG 13145 / JCM 31913 / LMG 7466 / NCTC 11488 / FDC 602W) (Vibrio succinogenes)).